Reading from the N-terminus, the 165-residue chain is V-type proton ATPase 16 kDa proteolipid subunit (165 aa).

Residues 1-10 are Lumenal-facing; it reads MSSVFSGDET. Residues 11-33 traverse the membrane as a helical segment; sequence APFFGFLGAASALIFSCMGAAYG. Topologically, residues 34-55 are cytoplasmic; it reads TAKSGVGVASMGVMRPELVMKS. The helical transmembrane segment at 56–76 threads the bilayer; sequence IVPVVMAGVLGIYGLIIAVII. Residues 77 to 95 lie on the Lumenal side of the membrane; it reads STGINPKAKPYYLFDGYAH. A helical transmembrane segment spans residues 96–117; sequence LSSGLACGLAGLAAGMAIGIVG. The Cytoplasmic segment spans residues 118–129; sequence DAGVRANAQQPK. The chain crosses the membrane as a helical span at residues 130–155; it reads LFVGMILILIFAEALALYGLIVGIIL. Topologically, residues 156 to 165 are lumenal; sequence SSRAGQSRAD.

It belongs to the V-ATPase proteolipid subunit family. In terms of assembly, V-ATPase is a heteromultimeric enzyme composed of a peripheral catalytic V1 complex (main components: subunits A, B, C, D, E, and F) attached to an integral membrane V0 proton pore complex (main component: the proteolipid protein; which is present as a hexamer that forms the proton-conducting pore).

It localises to the vacuole membrane. Its function is as follows. Proton-conducting pore forming subunit of the membrane integral V0 complex of vacuolar ATPase. V-ATPase is responsible for acidifying a variety of intracellular compartments in eukaryotic cells. The chain is V-type proton ATPase 16 kDa proteolipid subunit (VATP-P1) from Oryza sativa subsp. indica (Rice).